The chain runs to 395 residues: MLRWQTAGESHGEALVAMIEGLPAGVRISTDDIVSALARRRLGYGRGARMKFEQDKVRLLTGVRHGLTLGSPVAIEIANTEWPKWTEVMSADALDHDLPREGRNAPLSRPRPGHADLTGMRKYGFDDARPVLERSSARETASRVALGEVAKQFLDQAFGIRTVAHVVALGGVQTNPDLPLPTPDDLEALDASPVRTLDKEAEVRIIERINEAKKAADTLGGVIEVLAYGVPAGIGTYVESDRRLDAALASAIMGIQAFKGVEIGDGFLAASRPGSQAHDEIVVNADGRIDRLSNRAGGIEGGMSNGQVIRVRGAMKPIPSIPKALRTVDVLTGESAQAINQRSDSTAVPAASVVAEAMVRLTLAKYALDKFGGDSVAETRRNLESYLASWPEHMR.

The NADP(+) site is built by Arg40 and Arg46. Positions 98–120 (LPREGRNAPLSRPRPGHADLTGM) are disordered. FMN contacts are provided by residues 134–136 (RSS), 256–257 (QA), Gly301, 316–320 (KPIPS), and Arg342.

It belongs to the chorismate synthase family. In terms of assembly, homotetramer. Requires FMNH2 as cofactor.

It carries out the reaction 5-O-(1-carboxyvinyl)-3-phosphoshikimate = chorismate + phosphate. The protein operates within metabolic intermediate biosynthesis; chorismate biosynthesis; chorismate from D-erythrose 4-phosphate and phosphoenolpyruvate: step 7/7. In terms of biological role, catalyzes the anti-1,4-elimination of the C-3 phosphate and the C-6 proR hydrogen from 5-enolpyruvylshikimate-3-phosphate (EPSP) to yield chorismate, which is the branch point compound that serves as the starting substrate for the three terminal pathways of aromatic amino acid biosynthesis. This reaction introduces a second double bond into the aromatic ring system. The sequence is that of Chorismate synthase from Bifidobacterium longum subsp. infantis (strain ATCC 15697 / DSM 20088 / JCM 1222 / NCTC 11817 / S12).